Here is a 172-residue protein sequence, read N- to C-terminus: Antibacterial protein PR-39 (172 aa).

Positions methionine 1 to alanine 29 are cleaved as a signal peptide. Glutamine 30 is modified (pyrrolidone carboxylic acid). A propeptide spanning residues glutamine 30 to valine 130 is cleaved from the precursor. A disordered region spans residues aspartate 61–valine 80. Disulfide bonds link cysteine 85/cysteine 96 and cysteine 107/cysteine 124. The interval valine 130–arginine 172 is disordered. Positions proline 136–arginine 172 are enriched in pro residues. At proline 169 the chain carries Proline amide.

It belongs to the cathelicidin family. In terms of tissue distribution, small intestine and bone marrow.

The protein localises to the secreted. Its function is as follows. Exerts a potent antimicrobial activity against both E.coli and B.megaterium. The chain is Antibacterial protein PR-39 (PR39) from Sus scrofa (Pig).